A 77-amino-acid chain; its full sequence is UPF0291 protein Bsph_1689 (77 aa).

Belongs to the UPF0291 family.

The protein localises to the cytoplasm. The sequence is that of UPF0291 protein Bsph_1689 from Lysinibacillus sphaericus (strain C3-41).